Consider the following 225-residue polypeptide: Probable septum site-determining protein MinC (225 aa).

The protein belongs to the MinC family. Interacts with MinD and FtsZ.

Functionally, cell division inhibitor that blocks the formation of polar Z ring septums. Rapidly oscillates between the poles of the cell to destabilize FtsZ filaments that have formed before they mature into polar Z rings. Prevents FtsZ polymerization. This is Probable septum site-determining protein MinC from Listeria monocytogenes serotype 4b (strain CLIP80459).